Consider the following 86-residue polypeptide: Neurotoxin LmNaTx34.2 (86 aa).

Residues 1-18 (MKTLILVVIALMVIEVKS) form the signal peptide. The 67-residue stretch at 19 to 85 (DGYLMVRAGR…IWTYEKNTCS (67 aa)) folds into the LCN-type CS-alpha/beta domain. 4 disulfides stabilise this stretch: C32–C84, C36–C57, C43–C64, and C47–C66.

This sequence belongs to the long (4 C-C) scorpion toxin superfamily. Sodium channel inhibitor family. Beta subfamily. As to expression, expressed by the venom gland.

It localises to the secreted. Its function is as follows. Binds voltage-independently at site-4 of sodium channels (Nav) and shift the voltage of activation toward more negative potentials thereby affecting sodium channel activation and promoting spontaneous and repetitive firing. This is Neurotoxin LmNaTx34.2 from Lychas mucronatus (Chinese swimming scorpion).